The following is a 91-amino-acid chain: Small ribosomal subunit protein bS16 (91 aa).

The protein belongs to the bacterial ribosomal protein bS16 family. As to quaternary structure, part of the 30S ribosomal subunit.

Functionally, binds to the lower part of the body of the 30S subunit, where it stabilizes two of its domains. The polypeptide is Small ribosomal subunit protein bS16 (Thermus thermophilus).